Reading from the N-terminus, the 164-residue chain is MGKIGIFFGTDSGNAEAIAEKISKAIGNAEVVDVAKASKEQFNSFTKVILVAPTAGAGDLQTDWEDFLGTLEASDFATKTIGLVGLGDQDTYSETFAEGIFHIYEKAKAGKVVGQTPTDGYHFEASKAVEGGKFVGLVIDEDNQDDLTDERISKWVEQVKGSFA.

A Flavodoxin-like domain is found at 4–160; it reads IGIFFGTDSG…RISKWVEQVK (157 aa).

Belongs to the flavodoxin family. Requires FMN as cofactor.

Functionally, low-potential electron donor to a number of redox enzymes. The polypeptide is Flavodoxin (fldA) (Helicobacter pylori (strain ATCC 700392 / 26695) (Campylobacter pylori)).